The primary structure comprises 595 residues: Adenine deaminase 3 (595 aa).

It belongs to the metallo-dependent hydrolases superfamily. Adenine deaminase family. It depends on Mn(2+) as a cofactor.

The catalysed reaction is adenine + H2O + H(+) = hypoxanthine + NH4(+). The polypeptide is Adenine deaminase 3 (Rhizobium meliloti (strain 1021) (Ensifer meliloti)).